We begin with the raw amino-acid sequence, 75 residues long: Nigwaprin-a (75 aa).

The first 24 residues, 1 to 24, serve as a signal peptide directing secretion; the sequence is MSSGGLLLLLGLLTLWAELTPVSG. The WAP domain maps to 27–72; that stretch reads RPVKPGLCPPRPQKPPCVKECKNDWSCRGEQKCCRYGCIYECRDPI. Disulfide bonds link Cys34–Cys60, Cys43–Cys64, Cys47–Cys59, and Cys53–Cys68.

This sequence belongs to the venom waprin family. As to expression, expressed by the venom gland.

It localises to the secreted. In terms of biological role, damages membranes of susceptible bacteria. Has no hemolytic activity. Not toxic to mice. Does not inhibit the proteinases elastase and cathepsin G. This chain is Nigwaprin-a, found in Cryptophis nigrescens (Eastern small-eyed snake).